The sequence spans 255 residues: Transmembrane protein 81 (255 aa).

Residues 1-30 (MKVLATSFVLGSLGLAFYLPLVVTTPKTLA) form the signal peptide. Residues 31–226 (IPEKLQEAVG…HPKWKKKVAS (196 aa)) lie on the Extracellular side of the membrane. Asn-45 carries an N-linked (GlcNAc...) asparagine glycan. An Ig-like domain is found at 83-171 (TNWICGMLHF…VQLVKNLRLV (89 aa)). An intrachain disulfide couples Cys-104 to Cys-160. Residues 227–247 (ALGIGIAIGVVGGVLVRIVLC) form a helical membrane-spanning segment. Residues 248–255 (ALRGGLQQ) lie on the Cytoplasmic side of the membrane.

Forms a complex with IZUMO1 and SPACA6 on spermatocyte cell membrane required for fertilization. In terms of tissue distribution, highly expressed in sperm (at protein level).

The protein localises to the cell membrane. Essential fertilization factor required for male fertility. Part of a conserved trimeric sperm complex with the essential fertilization factors IZUMO1 and SPACA6 which bridges sperm and oocyte membranes during fertilization by binding to IZUMO1R/JUNO on the oocyte. The protein is Transmembrane protein 81 of Homo sapiens (Human).